Consider the following 249-residue polypeptide: tRNA pseudouridine synthase A (249 aa).

Catalysis depends on aspartate 54, which acts as the Nucleophile. Residue tyrosine 112 coordinates substrate.

Belongs to the tRNA pseudouridine synthase TruA family. As to quaternary structure, homodimer.

The enzyme catalyses uridine(38/39/40) in tRNA = pseudouridine(38/39/40) in tRNA. Its function is as follows. Formation of pseudouridine at positions 38, 39 and 40 in the anticodon stem and loop of transfer RNAs. This is tRNA pseudouridine synthase A from Latilactobacillus sakei subsp. sakei (strain 23K) (Lactobacillus sakei subsp. sakei).